The sequence spans 407 residues: Phosphopentomutase (407 aa).

Mn(2+) is bound by residues Asp-10, Asp-306, His-311, Asp-347, His-348, and His-359.

Belongs to the phosphopentomutase family. Mn(2+) serves as cofactor.

The protein localises to the cytoplasm. The catalysed reaction is 2-deoxy-alpha-D-ribose 1-phosphate = 2-deoxy-D-ribose 5-phosphate. It catalyses the reaction alpha-D-ribose 1-phosphate = D-ribose 5-phosphate. It participates in carbohydrate degradation; 2-deoxy-D-ribose 1-phosphate degradation; D-glyceraldehyde 3-phosphate and acetaldehyde from 2-deoxy-alpha-D-ribose 1-phosphate: step 1/2. Functionally, isomerase that catalyzes the conversion of deoxy-ribose 1-phosphate (dRib-1-P) and ribose 1-phosphate (Rib-1-P) to deoxy-ribose 5-phosphate (dRib-5-P) and ribose 5-phosphate (Rib-5-P), respectively. This chain is Phosphopentomutase, found in Shigella dysenteriae serotype 1 (strain Sd197).